Reading from the N-terminus, the 507-residue chain is MLNRVRSAVAHLVSSGGTSSQRSKSPDLPNATSAPPAAQETPKSSREKPGNQVGAPQKTAETTVSFSRPTFLQLSPGGLRRADDHAGRAVQSPPDTGRRLPWSTGYAEVINAGKSRHNEDQACCEVVYVESRRSRSVTGVSREPSHNQGFCFYYWGLFDGHAGGGAAEMASRLLHRHIREQLKDLVEILKDPLPPPLCLPSTPGTPGAPSPSQLVSPQSCWSPQKEVTHDSLIVGAIENAFHLMDEQMARERRGHQVEGGCCALVVLYLLGKMYVANAGDSRAIIVRNGEIIPMSREFTPETERQRLQLLGFLKPELLGSEFTHLEFPRRVQPKELGQRMLYRDQNMTGWAYKKIEVEDLRFPLVCGEGKKARVMATIGVTRGLGDHNLKVCSSTLSIKPFLSCFPEVRVYDLTQYEHCPDDVLVLGTDGLWDVTNDSEVAATVDRVLSSYEPNDPSRYTALAQALVLGARGIPRDRGWRLPNNKLGSGDDISVFVIPLGGPGSSYS.

Disordered regions lie at residues 1-102 and 197-220; these read MLNR…RLPW and LCLPSTPGTPGAPSPSQLVSPQSC. The segment covering 14 to 23 has biased composition (low complexity); the sequence is SSGGTSSQRS. Thr41 is modified (phosphothreonine). A compositionally biased stretch (polar residues) spans 59-73; sequence TAETTVSFSRPTFLQ. Ser65 and Ser75 each carry phosphoserine. The 397-residue stretch at 103-499 folds into the PPM-type phosphatase domain; that stretch reads STGYAEVINA…DDISVFVIPL (397 aa). Residues 199–212 show a composition bias toward low complexity; the sequence is LPSTPGTPGAPSPS.

It belongs to the PP2C family. Interacts with UBE2I/UBC9. In terms of tissue distribution, specifically expressed in the testicular germ cells.

The enzyme catalyses O-phospho-L-seryl-[protein] + H2O = L-seryl-[protein] + phosphate. It carries out the reaction O-phospho-L-threonyl-[protein] + H2O = L-threonyl-[protein] + phosphate. The polypeptide is Protein phosphatase 1J (Ppm1j) (Mus musculus (Mouse)).